The primary structure comprises 99 residues: EPIDERMAL PATTERNING FACTOR-like protein 8 (99 aa).

Positions Met-1–His-35 are cleaved as a signal peptide. Intrachain disulfides connect Cys-53–Cys-90, Cys-57–Cys-63, and Cys-60–Cys-92.

Belongs to the plant cysteine rich small secretory peptide family. Epidermal patterning factor subfamily.

Its subcellular location is the secreted. In terms of biological role, controls stomatal patterning. The protein is EPIDERMAL PATTERNING FACTOR-like protein 8 of Arabidopsis thaliana (Mouse-ear cress).